The chain runs to 555 residues: Membrane protein insertase YidC (555 aa).

The helical transmembrane segment at 7–24 (ILWVIFSMSLVLLYDNWQ) threads the bilayer. The disordered stretch occupies residues 62-81 (APGAAGTAAPAAPQAAAQPT). A run of 5 helical transmembrane segments spans residues 334 to 354 (LELV…FWLL), 360 to 380 (FLGN…LVFF), 430 to 450 (LGGC…YWVL), 468 to 488 (LSVP…MFVQ), and 503 to 523 (VMMI…AGLV).

Belongs to the OXA1/ALB3/YidC family. Type 1 subfamily. Interacts with the Sec translocase complex via SecD. Specifically interacts with transmembrane segments of nascent integral membrane proteins during membrane integration.

It localises to the cell inner membrane. Required for the insertion and/or proper folding and/or complex formation of integral membrane proteins into the membrane. Involved in integration of membrane proteins that insert both dependently and independently of the Sec translocase complex, as well as at least some lipoproteins. Aids folding of multispanning membrane proteins. The sequence is that of Membrane protein insertase YidC from Cupriavidus necator (strain ATCC 17699 / DSM 428 / KCTC 22496 / NCIMB 10442 / H16 / Stanier 337) (Ralstonia eutropha).